A 439-amino-acid polypeptide reads, in one-letter code: Probable serine/threonine-protein kinase WNK6 (439 aa).

The segment at 1-30 (MMPPKPAAEDVADEQPEPPDEDPDVAEADP) is disordered. Acidic residues predominate over residues 10-27 (DVADEQPEPPDEDPDVAE). The Protein kinase domain maps to 35–293 (LRYREIIGSG…ASELLKSPFL (259 aa)). ATP-binding positions include 116–119 (TELF) and K166. D183 acts as the Proton acceptor in catalysis.

This sequence belongs to the protein kinase superfamily. Ser/Thr protein kinase family. WNK subfamily.

The catalysed reaction is L-seryl-[protein] + ATP = O-phospho-L-seryl-[protein] + ADP + H(+). It catalyses the reaction L-threonyl-[protein] + ATP = O-phospho-L-threonyl-[protein] + ADP + H(+). The polypeptide is Probable serine/threonine-protein kinase WNK6 (WNK6) (Oryza sativa subsp. japonica (Rice)).